The primary structure comprises 194 residues: Orotate phosphoribosyltransferase (194 aa).

Residues R102, K103, K106, H108, and 129–137 each bind 5-phospho-alpha-D-ribose 1-diphosphate; that span reads EDVVTTGGS. Residues T133 and R161 each coordinate orotate.

Belongs to the purine/pyrimidine phosphoribosyltransferase family. PyrE subfamily. Homodimer. Mg(2+) is required as a cofactor.

It carries out the reaction orotidine 5'-phosphate + diphosphate = orotate + 5-phospho-alpha-D-ribose 1-diphosphate. It functions in the pathway pyrimidine metabolism; UMP biosynthesis via de novo pathway; UMP from orotate: step 1/2. Functionally, catalyzes the transfer of a ribosyl phosphate group from 5-phosphoribose 1-diphosphate to orotate, leading to the formation of orotidine monophosphate (OMP). This Prochlorococcus marinus (strain MIT 9211) protein is Orotate phosphoribosyltransferase.